A 336-amino-acid chain; its full sequence is Holliday junction branch migration complex subunit RuvB (336 aa).

The tract at residues 1–182 (MKERIVNLET…FGMSFRMQFY (182 aa)) is large ATPase domain (RuvB-L). ATP-binding positions include Leu21, Arg22, Gly63, Lys66, Thr67, Ser68, 129–131 (EDF), Arg172, Tyr182, and Arg219. Thr67 contacts Mg(2+). The interval 183 to 253 (SPSELALIIK…ITLHALNELG (71 aa)) is small ATPAse domain (RuvB-S). Residues 256–336 (ELGFDEADLA…IPTLKSQTLF (81 aa)) are head domain (RuvB-H). The DNA site is built by Arg310 and Arg315.

It belongs to the RuvB family. Homohexamer. Forms an RuvA(8)-RuvB(12)-Holliday junction (HJ) complex. HJ DNA is sandwiched between 2 RuvA tetramers; dsDNA enters through RuvA and exits via RuvB. An RuvB hexamer assembles on each DNA strand where it exits the tetramer. Each RuvB hexamer is contacted by two RuvA subunits (via domain III) on 2 adjacent RuvB subunits; this complex drives branch migration. In the full resolvosome a probable DNA-RuvA(4)-RuvB(12)-RuvC(2) complex forms which resolves the HJ.

The protein localises to the cytoplasm. It carries out the reaction ATP + H2O = ADP + phosphate + H(+). In terms of biological role, the RuvA-RuvB-RuvC complex processes Holliday junction (HJ) DNA during genetic recombination and DNA repair, while the RuvA-RuvB complex plays an important role in the rescue of blocked DNA replication forks via replication fork reversal (RFR). RuvA specifically binds to HJ cruciform DNA, conferring on it an open structure. The RuvB hexamer acts as an ATP-dependent pump, pulling dsDNA into and through the RuvAB complex. RuvB forms 2 homohexamers on either side of HJ DNA bound by 1 or 2 RuvA tetramers; 4 subunits per hexamer contact DNA at a time. Coordinated motions by a converter formed by DNA-disengaged RuvB subunits stimulates ATP hydrolysis and nucleotide exchange. Immobilization of the converter enables RuvB to convert the ATP-contained energy into a lever motion, pulling 2 nucleotides of DNA out of the RuvA tetramer per ATP hydrolyzed, thus driving DNA branch migration. The RuvB motors rotate together with the DNA substrate, which together with the progressing nucleotide cycle form the mechanistic basis for DNA recombination by continuous HJ branch migration. Branch migration allows RuvC to scan DNA until it finds its consensus sequence, where it cleaves and resolves cruciform DNA. The protein is Holliday junction branch migration complex subunit RuvB of Helicobacter pylori (strain HPAG1).